Here is a 294-residue protein sequence, read N- to C-terminus: Ribosomal protein L11 methyltransferase (294 aa).

Thr-144, Gly-165, Asp-187, and Asn-229 together coordinate S-adenosyl-L-methionine.

Belongs to the methyltransferase superfamily. PrmA family.

It localises to the cytoplasm. The enzyme catalyses L-lysyl-[protein] + 3 S-adenosyl-L-methionine = N(6),N(6),N(6)-trimethyl-L-lysyl-[protein] + 3 S-adenosyl-L-homocysteine + 3 H(+). Functionally, methylates ribosomal protein L11. This Pseudomonas aeruginosa (strain LESB58) protein is Ribosomal protein L11 methyltransferase.